We begin with the raw amino-acid sequence, 162 residues long: Catabolic 3-dehydroquinase (162 aa).

Residue Y24 is the Proton acceptor of the active site. Residues N88, H94, and D101 each coordinate substrate. H114 functions as the Proton donor in the catalytic mechanism. Residues 115 to 116 (VS) and R125 contribute to the substrate site.

The protein belongs to the type-II 3-dehydroquinase family. In terms of assembly, homododecamer. Adopts a ring-like structure, composed of an arrangement of two hexameric rings stacked on top of one another.

The enzyme catalyses 3-dehydroquinate = 3-dehydroshikimate + H2O. Its pathway is aromatic compound metabolism; 3,4-dihydroxybenzoate biosynthesis; 3,4-dihydroxybenzoate from 3-dehydroquinate: step 1/2. Functionally, is involved in the catabolism of quinate. Allows the utilization of quinate as carbon source via the beta-ketoadipate pathway. This chain is Catabolic 3-dehydroquinase, found in Podospora anserina (strain S / ATCC MYA-4624 / DSM 980 / FGSC 10383) (Pleurage anserina).